Here is a 252-residue protein sequence, read N- to C-terminus: MIKKRIIPCLDVKDGRVVKGIQFKGLRDIGNPVDLAMYYNEAGADELVFLDISKTEEGHSLMLEVIEQTASRLFIPLTVGGGIQSLDDITQLLNHGADKVSLNSSALKNPQLIKQASDKFGRQCICIAIDSYYDPERKAHYCCTTGGKKMTNIKVYDWVQQVEQLGAGELLVTSMGHDGMKQGFDIEHLANIKSLVNIPIIASGGGGNAQHFVELFDQTDVSAGLAASILHDRETTVQSIKEVIRQGGIAVR.

Active-site residues include D11 and D130.

It belongs to the HisA/HisF family. As to quaternary structure, heterodimer of HisH and HisF.

The protein localises to the cytoplasm. The enzyme catalyses 5-[(5-phospho-1-deoxy-D-ribulos-1-ylimino)methylamino]-1-(5-phospho-beta-D-ribosyl)imidazole-4-carboxamide + L-glutamine = D-erythro-1-(imidazol-4-yl)glycerol 3-phosphate + 5-amino-1-(5-phospho-beta-D-ribosyl)imidazole-4-carboxamide + L-glutamate + H(+). It functions in the pathway amino-acid biosynthesis; L-histidine biosynthesis; L-histidine from 5-phospho-alpha-D-ribose 1-diphosphate: step 5/9. IGPS catalyzes the conversion of PRFAR and glutamine to IGP, AICAR and glutamate. The HisF subunit catalyzes the cyclization activity that produces IGP and AICAR from PRFAR using the ammonia provided by the HisH subunit. The polypeptide is Imidazole glycerol phosphate synthase subunit HisF (Staphylococcus aureus (strain USA300)).